The sequence spans 192 residues: Superoxide dismutase [Fe] (192 aa).

Fe cation is bound by residues His-27, His-74, Asp-157, and His-161.

The protein belongs to the iron/manganese superoxide dismutase family. As to quaternary structure, homodimer. Fe cation serves as cofactor.

The enzyme catalyses 2 superoxide + 2 H(+) = H2O2 + O2. In terms of biological role, destroys superoxide anion radicals which are normally produced within the cells and which are toxic to biological systems. This chain is Superoxide dismutase [Fe] (sodB), found in Legionella pneumophila subsp. pneumophila (strain Philadelphia 1 / ATCC 33152 / DSM 7513).